The sequence spans 329 residues: Taste receptor type 2 member 134 (329 aa).

Residues 1–27 lie on the Extracellular side of the membrane; it reads MRCSLRGCVQGRGGKSGVSLSKFSPKK. Residues 28–48 form a helical membrane-spanning segment; that stretch reads MSFFFIFMVIFCIQSLVALLQ. Over 49 to 68 the chain is Cytoplasmic; the sequence is NGFLATVLGREWVRSQGLPA. Residues 69–89 traverse the membrane as a helical segment; sequence GDMIVACLAASRFCLHGVAIV. Over 90–121 the chain is Extracellular; that stretch reads NNFLTFVKLWSQKIYFSVLWDFVNTVNFWCTT. A helical membrane pass occupies residues 122 to 142; that stretch reads WLAIFYCVKISSFSHPIFFWI. At 143-153 the chain is on the cytoplasmic side; sequence KWRISRSVPRL. A helical membrane pass occupies residues 154–174; the sequence is LLGSLVIGGLSAVSSATGNTI. The Extracellular segment spans residues 175–201; the sequence is AFQMTACENYTLAYRTRAFYAYYFRCH. The N-linked (GlcNAc...) asparagine glycan is linked to Asn-183. The helical transmembrane segment at 202–222 threads the bilayer; the sequence is AMLMWIIPFFLFLLSVILLMF. Over 223–251 the chain is Cytoplasmic; the sequence is SLYRHLEHMRYRRPWSHDYSTQAHTMALK. Residues 252–272 traverse the membrane as a helical segment; sequence SLAFFLVFYTSYVLFLVISVT. Residues 273–282 are Extracellular-facing; the sequence is RVVNVHSSWH. A helical membrane pass occupies residues 283–303; that stretch reads WAWEVITYMGILLHSTILTLS. The Cytoplasmic portion of the chain corresponds to 304–329; the sequence is NPKMRKALKIKFPDLCVARSQDKRRG.

This sequence belongs to the G-protein coupled receptor T2R family. As to expression, expressed in tongue and gastrointestinal tract.

It is found in the membrane. Functionally, putative taste receptor which may play a role in the perception of bitterness. The protein is Taste receptor type 2 member 134 of Rattus norvegicus (Rat).